Here is a 574-residue protein sequence, read N- to C-terminus: Acetolactate synthase isozyme 3 large subunit (574 aa).

Residue Glu51 coordinates thiamine diphosphate. Residues Arg153, 261 to 282, and 304 to 323 contribute to the FAD site; these read HGTYEANMTMHNADVIFAVGVR and DIDPTSISKTVTADIPIVGD. Residues 397 to 477 are thiamine pyrophosphate binding; that stretch reads QHQMFAALYY…VLVVNLNNRY (81 aa). Mg(2+) is bound by residues Asp448 and Asn475.

Belongs to the TPP enzyme family. In terms of assembly, dimer of large and small chains. It depends on Mg(2+) as a cofactor. The cofactor is thiamine diphosphate.

It catalyses the reaction 2 pyruvate + H(+) = (2S)-2-acetolactate + CO2. It participates in amino-acid biosynthesis; L-isoleucine biosynthesis; L-isoleucine from 2-oxobutanoate: step 1/4. Its pathway is amino-acid biosynthesis; L-valine biosynthesis; L-valine from pyruvate: step 1/4. With respect to regulation, sensitive to valine inhibition. The sequence is that of Acetolactate synthase isozyme 3 large subunit (ilvI) from Escherichia coli (strain K12).